We begin with the raw amino-acid sequence, 111 residues long: Mitochondrial import inner membrane translocase subunit TIM14 (111 aa).

The Mitochondrial intermembrane portion of the chain corresponds to 1-3 (MTG). The chain crosses the membrane as a helical span at residues 4-24 (GLIAAGLGLAAVGFGARYVLR). The Mitochondrial matrix portion of the chain corresponds to 25–111 (NQALIKKGME…AKDLMESTKS (87 aa)). The region spanning 58-111 (EAAKILGITPSAKPAKIKDAHKKVMIVNHPDRGGSPYLAAKINEAKDLMESTKS) is the J domain.

Belongs to the TIM14 family. As to quaternary structure, probable component of the PAM complex at least composed of a mitochondrial HSP70 protein, GrpE, tim-44, tim-16 and tim-14.

It is found in the mitochondrion inner membrane. Functionally, probable component of the PAM complex, a complex required for the translocation of transit peptide-containing proteins from the inner membrane into the mitochondrial matrix in an ATP-dependent manner. May act as a co-chaperone that stimulate the ATP-dependent activity. The polypeptide is Mitochondrial import inner membrane translocase subunit TIM14 (dnj-21) (Caenorhabditis briggsae).